Consider the following 285-residue polypeptide: Octanoyltransferase (285 aa).

Residues 50–277 (LRTPDELWIV…NIAQRHAGDI (228 aa)) enclose the BPL/LPL catalytic domain. Residues 89-96 (RGGQVTWH), 189-191 (SLG), and 202-204 (GIA) contribute to the substrate site. Cysteine 220 acts as the Acyl-thioester intermediate in catalysis.

This sequence belongs to the LipB family.

It is found in the cytoplasm. The enzyme catalyses octanoyl-[ACP] + L-lysyl-[protein] = N(6)-octanoyl-L-lysyl-[protein] + holo-[ACP] + H(+). It participates in protein modification; protein lipoylation via endogenous pathway; protein N(6)-(lipoyl)lysine from octanoyl-[acyl-carrier-protein]: step 1/2. Functionally, catalyzes the transfer of endogenously produced octanoic acid from octanoyl-acyl-carrier-protein onto the lipoyl domains of lipoate-dependent enzymes. Lipoyl-ACP can also act as a substrate although octanoyl-ACP is likely to be the physiological substrate. This Psychrobacter cryohalolentis (strain ATCC BAA-1226 / DSM 17306 / VKM B-2378 / K5) protein is Octanoyltransferase.